The primary structure comprises 264 residues: Thymidylate synthase (264 aa).

A dUMP-binding site is contributed by R21. Residue H51 coordinates (6R)-5,10-methylene-5,6,7,8-tetrahydrofolate. 126–127 (RR) is a dUMP binding site. C146 acts as the Nucleophile in catalysis. DUMP is bound by residues 166–169 (RSAD), N177, and 207–209 (HIY). (6R)-5,10-methylene-5,6,7,8-tetrahydrofolate is bound at residue D169. A263 contributes to the (6R)-5,10-methylene-5,6,7,8-tetrahydrofolate binding site.

It belongs to the thymidylate synthase family. Bacterial-type ThyA subfamily. In terms of assembly, homodimer.

It localises to the cytoplasm. The catalysed reaction is dUMP + (6R)-5,10-methylene-5,6,7,8-tetrahydrofolate = 7,8-dihydrofolate + dTMP. The protein operates within pyrimidine metabolism; dTTP biosynthesis. Catalyzes the reductive methylation of 2'-deoxyuridine-5'-monophosphate (dUMP) to 2'-deoxythymidine-5'-monophosphate (dTMP) while utilizing 5,10-methylenetetrahydrofolate (mTHF) as the methyl donor and reductant in the reaction, yielding dihydrofolate (DHF) as a by-product. This enzymatic reaction provides an intracellular de novo source of dTMP, an essential precursor for DNA biosynthesis. This is Thymidylate synthase from Agrobacterium fabrum (strain C58 / ATCC 33970) (Agrobacterium tumefaciens (strain C58)).